A 208-amino-acid polypeptide reads, in one-letter code: Putative RING finger protein 413R (208 aa).

Residues 1–87 (MDAIFYPLPI…RHWSDDDSDR (87 aa)) form a disordered region. A compositionally biased stretch (acidic residues) spans 22–71 (DFQEEDFQEEDFQEEDFQEEDFQEEDEDEEDEEVNEYPSDLDDEYPDSDY). Basic and acidic residues predominate over residues 72–82 (YDERSDRHWSD). Residues 83 to 147 (DDSDRDLDDL…KLTTLSKNLT (65 aa)) are a coiled coil. The RING-type zinc-finger motif lies at 148–196 (CIICLTNQVQILTIPCGHLIMCNPCSLNLNNSVCTRGVNSNYEKCPKCR).

The chain is Putative RING finger protein 413R (EF2) from Acheta domesticus (House cricket).